A 360-amino-acid chain; its full sequence is Neutral protease 2 homolog SS1G_13741 (360 aa).

An N-linked (GlcNAc...) asparagine glycan is attached at asparagine 129. Disulfide bonds link cysteine 189–cysteine 261 and cysteine 268–cysteine 286. Histidine 311 is a Zn(2+) binding site. The active site involves glutamate 312. The Zn(2+) site is built by histidine 315 and aspartate 326.

It belongs to the peptidase M35 family. It depends on Zn(2+) as a cofactor.

The protein resides in the secreted. It carries out the reaction Preferential cleavage of bonds with hydrophobic residues in P1'. Also 3-Asn-|-Gln-4 and 8-Gly-|-Ser-9 bonds in insulin B chain.. Its function is as follows. Secreted metalloproteinase that allows assimilation of proteinaceous substrates. Shows high activities on basic nuclear substrates such as histone and protamine. The polypeptide is Neutral protease 2 homolog SS1G_13741 (Sclerotinia sclerotiorum (strain ATCC 18683 / 1980 / Ss-1) (White mold)).